Consider the following 145-residue polypeptide: Small t antigen (145 aa).

The J domain maps to 6 to 82 (RLTELLCLPV…PEESGYATFE (77 aa)). The segment at 58–80 (EGLRADETLEDSDPEPEESGYAT) is disordered. The span at 65–75 (TLEDSDPEPEE) shows a compositional bias: acidic residues.

As to quaternary structure, interacts with host PPP2R1A; the interaction inhibits PP2A activity.

It localises to the host cytoplasm. The protein resides in the host nucleus. Functionally, promotes efficient viral genome replication by accelerating both G1 and S phase progression of the cell cycle. The chain is Small t antigen from Budgerigar fledgling disease virus (BFPyV).